A 353-amino-acid polypeptide reads, in one-letter code: C-X-C chemokine receptor type 4 (353 aa).

The segment at 1–22 (MDGFRIYPSDNYTEDDLGSGDY) is important for chemokine binding and signaling. Over 1–39 (MDGFRIYPSDNYTEDDLGSGDYDSMKEPCFREENAHFNR) the chain is Extracellular. Residue Tyr7 is modified to Sulfotyrosine. N-linked (GlcNAc...) asparagine glycosylation is present at Asn11. A Sulfotyrosine modification is found at Tyr12. Ser19 carries an O-linked (Xyl...) (chondroitin sulfate) serine glycan. Tyr22 carries the post-translational modification Sulfotyrosine. Intrachain disulfides connect Cys29–Cys275 and Cys110–Cys187. The helical transmembrane segment at 40–64 (IFLPTVYSIIFLTGIVGNGLVILVM) threads the bilayer. Over 65 to 78 (GYQKKLRSMTDKYR) the chain is Cytoplasmic. The helical transmembrane segment at 79-100 (LHLSVADLLFVLTLPFWAVDAV) threads the bilayer. The chemokine binding stretch occupies residues 95–98 (WAVD). The Extracellular portion of the chain corresponds to 101-111 (ANWYFGKFLCK). A helical membrane pass occupies residues 112 to 131 (AVHVIYTVNLYSSVLILAFI). The segment at 114–118 (HVIYT) is chemokine binding. Topologically, residues 132–155 (SLDRYLAIVHATNSQRPRKLLAEK) are cytoplasmic. The Important for signaling signature appears at 134–136 (DRY). The involved in dimerization; when bound to chemokine stretch occupies residues 136-148 (YLAIVHATNSQRP). The helical transmembrane segment at 156 to 175 (VVYVGVWIPALLLTIPDFIF) threads the bilayer. Topologically, residues 176–196 (ANVREADGRYICDRFYPSDSW) are extracellular. Positions 187 to 191 (CDRFY) are chemokine binding, important for signaling. Residues 192–211 (PSDSWLVVFQFQHIMVGLIL) form an involved in dimerization region. Residues 197-217 (LVVFQFQHIMVGLILPGIVIL) form a helical membrane-spanning segment. Residues 218–242 (SCYCIIISKLSHSKGYQKRKALKTT) are Cytoplasmic-facing. A helical transmembrane segment spans residues 243-262 (VILILAFFACWLPYYIGISI). Residues 263-283 (DSFILLEIIKQGCEFESTVHK) are Extracellular-facing. An involved in dimerization region spans residues 267 to 269 (LLE). A helical membrane pass occupies residues 284–303 (WISITEALAFFHCCLNPILY). Over 304–353 (AFLGAKFKTSAQHALTSVSRGSSLKILSKGKRGGHSSVSTESESSSFHSS) the chain is Cytoplasmic. Phosphoserine occurs at positions 320 and 322. Phosphoserine; by PKC and GRK6 is present on residues Ser325 and Ser326. Residues 330-353 (LSKGKRGGHSSVSTESESSSFHSS) form a disordered region. At Ser331 the chain carries Phosphoserine; by GRK6. Lys332 participates in a covalent cross-link: Glycyl lysine isopeptide (Lys-Gly) (interchain with G-Cter in ubiquitin). The span at 338–353 (HSSVSTESESSSFHSS) shows a compositional bias: low complexity. Ser340 carries the phosphoserine; by GRK6 modification. Phosphoserine occurs at positions 349 and 352.

Belongs to the G-protein coupled receptor 1 family. In terms of assembly, monomer. Can form homodimers. Interacts with CD164. Interacts with ARRB2; the interaction is dependent on the C-terminal phosphorylation of CXCR4 and allows activation of MAPK1 and MAPK3. Interacts with ARR3; the interaction is dependent on the C-terminal phosphorylation of CXCR4 and modulates calcium mobilization. Interacts with RNF113A; the interaction, enhanced by CXCL12, promotes CXCR4 ubiquitination and subsequent degradation. Interacts (via the cytoplasmic C-terminal) with ITCH (via the WW domains I and II); the interaction, enhanced by CXCL12, promotes CXCR4 ubiquitination and leads to its degradation. Interacts with extracellular ubiquitin. Interacts with DBN1; this interaction is enhanced by antigenic stimulation. Following LPS binding, may form a complex with GDF5, HSP90AA1 and HSPA8. In terms of processing, phosphorylated on agonist stimulation. Rapidly phosphorylated on serine and threonine residues in the C-terminal. Phosphorylation at Ser-325 and Ser-326 leads to recruitment of ITCH, ubiquitination and protein degradation. Post-translationally, ubiquitinated after ligand binding, leading to its degradation. Ubiquitinated by ITCH at the cell membrane on agonist stimulation. The ubiquitin-dependent mechanism, endosomal sorting complex required for transport (ESCRT), then targets CXCR4 for lysosomal degradation. This process is dependent also on prior Ser-/Thr-phosphorylation in the C-terminal of CXCR4. Also binding of ARRB1 to STAM negatively regulates CXCR4 sorting to lysosomes though modulating ubiquitination of SFR5S. Sulfation is required for efficient binding of CXCL12/SDF-1alpha and promotes its dimerization. In terms of processing, O- and N-glycosylated. N-glycosylation can mask coreceptor function. The O-glycosylation chondroitin sulfate attachment does not affect interaction with CXCL12/SDF-1alpha nor its coreceptor activity.

The protein localises to the cell membrane. It is found in the cell junction. The protein resides in the early endosome. It localises to the late endosome. Its subcellular location is the lysosome. Its function is as follows. Receptor for the C-X-C chemokine CXCL12/SDF-1 that transduces a signal by increasing intracellular calcium ion levels and enhancing MAPK1/MAPK3 activation. Involved in the AKT signaling cascade. Plays a role in regulation of cell migration, e.g. during wound healing. Acts as a receptor for extracellular ubiquitin; leading to enhanced intracellular calcium ions and reduced cellular cAMP levels. Binds bacterial lipopolysaccharide (LPS) et mediates LPS-induced inflammatory response, including TNF secretion by monocytes. Involved in hematopoiesis and in cardiac ventricular septum formation. Also plays an essential role in vascularization of the gastrointestinal tract, probably by regulating vascular branching and/or remodeling processes in endothelial cells. Involved in cerebellar development. In the CNS, could mediate hippocampal-neuron survival. This Felis catus (Cat) protein is C-X-C chemokine receptor type 4 (CXCR4).